Consider the following 453-residue polypeptide: Phosphoglucosamine mutase (453 aa).

The Phosphoserine intermediate role is filled by serine 108. Residues serine 108, aspartate 247, aspartate 249, and aspartate 251 each coordinate Mg(2+). Phosphoserine is present on serine 108.

This sequence belongs to the phosphohexose mutase family. It depends on Mg(2+) as a cofactor. In terms of processing, activated by phosphorylation.

It carries out the reaction alpha-D-glucosamine 1-phosphate = D-glucosamine 6-phosphate. In terms of biological role, catalyzes the conversion of glucosamine-6-phosphate to glucosamine-1-phosphate. This chain is Phosphoglucosamine mutase, found in Methylobacillus flagellatus (strain ATCC 51484 / DSM 6875 / VKM B-1610 / KT).